The following is a 142-amino-acid chain: Large ribosomal subunit protein uL11 (142 aa).

The protein belongs to the universal ribosomal protein uL11 family. Part of the ribosomal stalk of the 50S ribosomal subunit. Interacts with L10 and the large rRNA to form the base of the stalk. L10 forms an elongated spine to which L12 dimers bind in a sequential fashion forming a multimeric L10(L12)X complex. Post-translationally, one or more lysine residues are methylated.

Functionally, forms part of the ribosomal stalk which helps the ribosome interact with GTP-bound translation factors. The chain is Large ribosomal subunit protein uL11 from Lachnoclostridium phytofermentans (strain ATCC 700394 / DSM 18823 / ISDg) (Clostridium phytofermentans).